Here is a 295-residue protein sequence, read N- to C-terminus: MRFETTVQRPVEASGVGLHSGVPVKIRILPAPVSTGVVFVRTDLDGFQIPASWRHVARVSYATSLMRQGVLISTTEHLLSVFYSMGIDNVYVEIDNLEVPILDGSGLPFVKLIAQAGIRQYRRKRRYLRIRRPISVEDKGKRISILPDEAFRLTCDTEYPAPVGRQSLELVVTPEHYASELAFARTFGWENDLDQMRNMGLIRGASLANAVCFTSEGPLNPDGLRAVDECCRHKALDLIGDLALLGRPLLGHVIAERAGHAMHAALVARIMGDPSIYEIITFDQLASRVTQALVS.

Zn(2+) contacts are provided by H77, H233, and D237. Residue H260 is the Proton donor of the active site.

The protein belongs to the LpxC family. Requires Zn(2+) as cofactor.

It catalyses the reaction a UDP-3-O-[(3R)-3-hydroxyacyl]-N-acetyl-alpha-D-glucosamine + H2O = a UDP-3-O-[(3R)-3-hydroxyacyl]-alpha-D-glucosamine + acetate. It participates in glycolipid biosynthesis; lipid IV(A) biosynthesis; lipid IV(A) from (3R)-3-hydroxytetradecanoyl-[acyl-carrier-protein] and UDP-N-acetyl-alpha-D-glucosamine: step 2/6. In terms of biological role, catalyzes the hydrolysis of UDP-3-O-myristoyl-N-acetylglucosamine to form UDP-3-O-myristoylglucosamine and acetate, the committed step in lipid A biosynthesis. In Solibacter usitatus (strain Ellin6076), this protein is UDP-3-O-acyl-N-acetylglucosamine deacetylase.